Consider the following 182-residue polypeptide: Peptidyl-tRNA hydrolase (182 aa).

Tyr14 serves as a coordination point for tRNA. His19 serves as the catalytic Proton acceptor. Positions 65, 67, and 113 each coordinate tRNA.

Belongs to the PTH family. In terms of assembly, monomer.

The protein resides in the cytoplasm. The catalysed reaction is an N-acyl-L-alpha-aminoacyl-tRNA + H2O = an N-acyl-L-amino acid + a tRNA + H(+). Its function is as follows. Hydrolyzes ribosome-free peptidyl-tRNAs (with 1 or more amino acids incorporated), which drop off the ribosome during protein synthesis, or as a result of ribosome stalling. Functionally, catalyzes the release of premature peptidyl moieties from peptidyl-tRNA molecules trapped in stalled 50S ribosomal subunits, and thus maintains levels of free tRNAs and 50S ribosomes. This Rickettsia peacockii (strain Rustic) protein is Peptidyl-tRNA hydrolase.